We begin with the raw amino-acid sequence, 666 residues long: DNA-directed RNA polymerase subunit beta' (666 aa).

4 residues coordinate Zn(2+): C69, C71, C87, and C90. Residues D489, D491, and D493 each coordinate Mg(2+).

Belongs to the RNA polymerase beta' chain family. RpoC1 subfamily. As to quaternary structure, in plastids the minimal PEP RNA polymerase catalytic core is composed of four subunits: alpha, beta, beta', and beta''. When a (nuclear-encoded) sigma factor is associated with the core the holoenzyme is formed, which can initiate transcription. Mg(2+) serves as cofactor. The cofactor is Zn(2+).

The protein localises to the plastid. It localises to the chloroplast. It catalyses the reaction RNA(n) + a ribonucleoside 5'-triphosphate = RNA(n+1) + diphosphate. Its function is as follows. DNA-dependent RNA polymerase catalyzes the transcription of DNA into RNA using the four ribonucleoside triphosphates as substrates. The sequence is that of DNA-directed RNA polymerase subunit beta' from Chara vulgaris (Common stonewort).